The chain runs to 320 residues: MSVAVLGAGAFGTALAISLARKAPTTLWCRSKDHADEIRSTRENTRRLPGAPLPDALAVTSDIACLGAHDVILLAVPMQKMRGFLTAHHAALSGKTLVACCKGIELDSGLGPVAVLRDTVPDATAALLTGPSFAADIALGLPTALTLACDPDETGKALQATLSTDNLRLYRTTDLTGAEIGGALKNVIAIACGAVIGARLGDSARAALMTRGYAEMQRLALARGARPETLAGLSGFGDLTLTCGSELSRNFRLGLSLGRGEAFDPSITVEGAATARATAKTAQEMGLEMPITQTVTNLLDQRLTISDAADQLLKRPLKEE.

NADPH-binding residues include phenylalanine 11, arginine 30, and lysine 102. Residues lysine 102, glycine 130, and serine 132 each coordinate sn-glycerol 3-phosphate. Alanine 134 provides a ligand contact to NADPH. Residues lysine 185, aspartate 238, serine 248, arginine 249, and asparagine 250 each contribute to the sn-glycerol 3-phosphate site. Lysine 185 (proton acceptor) is an active-site residue. Position 249 (arginine 249) interacts with NADPH. An NADPH-binding site is contributed by glutamate 270.

It belongs to the NAD-dependent glycerol-3-phosphate dehydrogenase family.

It is found in the cytoplasm. The enzyme catalyses sn-glycerol 3-phosphate + NAD(+) = dihydroxyacetone phosphate + NADH + H(+). The catalysed reaction is sn-glycerol 3-phosphate + NADP(+) = dihydroxyacetone phosphate + NADPH + H(+). It participates in membrane lipid metabolism; glycerophospholipid metabolism. Catalyzes the reduction of the glycolytic intermediate dihydroxyacetone phosphate (DHAP) to sn-glycerol 3-phosphate (G3P), the key precursor for phospholipid synthesis. This chain is Glycerol-3-phosphate dehydrogenase [NAD(P)+], found in Ruegeria sp. (strain TM1040) (Silicibacter sp.).